Consider the following 268-residue polypeptide: MERYQQLFKQLAAKKEGAFVPFVQLGDPSPAMSLNIIDTLIAAGADALELGIPFSDPLADGPTIQNAALRAFAAGVTPAICFEILAEIRQKHPTIPIGLLMYANLVFHNGIDHFYQRCAEVGVDSVLIADVPFEESAPFRAAALRHGIAPIFICPPNADGDLLREIASHGRGYTYLLSRAGVTGAENHGQLPLNHLVDKLREYNAAPALQGFGISEPAQVKASLAAGAAGAISGSAIVKIIEKNVAQPVEMLVQLTRFVTEMKAATRS.

Catalysis depends on proton acceptor residues glutamate 49 and aspartate 60.

Belongs to the TrpA family. Tetramer of two alpha and two beta chains.

It carries out the reaction (1S,2R)-1-C-(indol-3-yl)glycerol 3-phosphate + L-serine = D-glyceraldehyde 3-phosphate + L-tryptophan + H2O. Its pathway is amino-acid biosynthesis; L-tryptophan biosynthesis; L-tryptophan from chorismate: step 5/5. Its function is as follows. The alpha subunit is responsible for the aldol cleavage of indoleglycerol phosphate to indole and glyceraldehyde 3-phosphate. The polypeptide is Tryptophan synthase alpha chain (Yersinia pseudotuberculosis serotype O:3 (strain YPIII)).